We begin with the raw amino-acid sequence, 115 residues long: Large ribosomal subunit protein bL20 (115 aa).

This sequence belongs to the bacterial ribosomal protein bL20 family.

In terms of biological role, binds directly to 23S ribosomal RNA and is necessary for the in vitro assembly process of the 50S ribosomal subunit. It is not involved in the protein synthesizing functions of that subunit. This is Large ribosomal subunit protein bL20 from Chlorobium phaeobacteroides (strain DSM 266 / SMG 266 / 2430).